The following is a 156-amino-acid chain: Small ribosomal subunit protein uS7 (156 aa).

Belongs to the universal ribosomal protein uS7 family. As to quaternary structure, part of the 30S ribosomal subunit. Contacts proteins S9 and S11.

One of the primary rRNA binding proteins, it binds directly to 16S rRNA where it nucleates assembly of the head domain of the 30S subunit. Is located at the subunit interface close to the decoding center, probably blocks exit of the E-site tRNA. The polypeptide is Small ribosomal subunit protein uS7 (Carsonella ruddii).